The primary structure comprises 258 residues: L-aspartate dehydrogenase 1 (258 aa).

Residues Ala121 and Asn181 each coordinate NAD(+). Residue His211 is part of the active site.

It belongs to the L-aspartate dehydrogenase family.

The enzyme catalyses L-aspartate + NADP(+) + H2O = oxaloacetate + NH4(+) + NADPH + H(+). It catalyses the reaction L-aspartate + NAD(+) + H2O = oxaloacetate + NH4(+) + NADH + H(+). Its pathway is cofactor biosynthesis; NAD(+) biosynthesis; iminoaspartate from L-aspartate (dehydrogenase route): step 1/1. In terms of biological role, specifically catalyzes the NAD or NADP-dependent dehydrogenation of L-aspartate to iminoaspartate. The polypeptide is L-aspartate dehydrogenase 1 (Bordetella bronchiseptica (strain ATCC BAA-588 / NCTC 13252 / RB50) (Alcaligenes bronchisepticus)).